The sequence spans 243 residues: ATP synthase subunit a (243 aa).

A run of 7 helical transmembrane segments spans residues 29–49 (NASL…YIGL), 54–74 (ILPN…VSTI), 89–109 (VFTI…PLGF), 114–134 (HIAV…AIGF), 144–164 (ILLP…IELF), 182–202 (IAGH…NIFL), and 208–228 (AFII…AYIF).

The protein belongs to the ATPase A chain family. In terms of assembly, F-type ATPases have 2 components, CF(1) - the catalytic core - and CF(0) - the membrane proton channel. CF(1) has five subunits: alpha(3), beta(3), gamma(1), delta(1), epsilon(1). CF(0) has three main subunits: a(1), b(2) and c(9-12). The alpha and beta chains form an alternating ring which encloses part of the gamma chain. CF(1) is attached to CF(0) by a central stalk formed by the gamma and epsilon chains, while a peripheral stalk is formed by the delta and b chains.

The protein localises to the cell inner membrane. Its function is as follows. Key component of the proton channel; it plays a direct role in the translocation of protons across the membrane. This chain is ATP synthase subunit a, found in Ehrlichia chaffeensis (strain ATCC CRL-10679 / Arkansas).